Reading from the N-terminus, the 291-residue chain is uncharacterized protein (291 aa).

The next 2 membrane-spanning stretches (helical) occupy residues 42–62 and 86–106; these read IFFFLILILVFVLWILVRALW and TIFPCFISIFIVEPSFALALD.

It belongs to the cytochrome c oxidase subunit 2 family.

Its subcellular location is the mitochondrion membrane. This is an uncharacterized protein from Arabidopsis thaliana (Mouse-ear cress).